Consider the following 574-residue polypeptide: Sentrin-specific protease 3 (574 aa).

Residues 1-125 (MKETIQGTGS…PTHRKTCSQR (125 aa)) form a disordered region. 3 positions are modified to phosphoserine: Ser54, Ser73, and Ser75. The segment covering 74–93 (ASEEEEEEEEEEDEDEEEEV) has biased composition (acidic residues). The segment covering 112–125 (RPSRPTHRKTCSQR) has biased composition (basic residues). 2 consecutive short sequence motifs (nuclear localization signal) follow at residues 125 to 128 (RRRR) and 153 to 159 (RHRGRRR). The tract at residues 161–181 (LAHPKNHLSPQQGGATPQVPS) is disordered. A Phosphoserine modification is found at Ser169. Phosphothreonine is present on Thr176. A phosphoserine mark is found at Ser181, Ser188, Ser212, and Ser232. The tract at residues 386–543 (HVLTMDDLGT…AFVLQYCKHL (158 aa)) is protease. Active-site residues include His465 and Asp482. The active-site Nucleophile is the Cys532.

It belongs to the peptidase C48 family. As to quaternary structure, component of some MLL1/MLL complex, at least composed of the core components KMT2A/MLL1, ASH2L, HCFC1/HCF1, WDR5 and RBBP5, as well as the facultative components BACC1, CHD8, E2F6, HSP70, INO80C, KANSL1, LAS1L, MAX, MCRS1, MGA, MYST1/MOF, PELP1, PHF20, PRP31, RING2, RUVB1/TIP49A, RUVB2/TIP49B, SENP3, TAF1, TAF4, TAF6, TAF7, TAF9 and TEX10. Interacts with EP300, NPM1 and CDCA8. Component of the 5FMC complex, at least composed of PELP1, LAS1L, TEX10, WDR18 and SENP3; the complex interacts with methylated CHTOP and ZNF148. Interacts with NOL9. Interacts with CCAR2.

The protein resides in the nucleus. Its subcellular location is the nucleolus. It localises to the nucleoplasm. It is found in the cytoplasm. On oxidative stress, SENP3 degradation is blocked by inhibition of its ubiquitination, which stabilizes it as it accumulates in the nucleoplasm. Functionally, protease that releases SUMO2 and SUMO3 monomers from sumoylated substrates, but has only weak activity against SUMO1 conjugates. Deconjugates SUMO2 from MEF2D, which increases its transcriptional activation capability. Deconjugates SUMO2 and SUMO3 from CDCA8. Redox sensor that, when redistributed into nucleoplasm, can act as an effector to enhance HIF1A transcriptional activity by desumoylating EP300. Required for rRNA processing through deconjugation of SUMO2 and SUMO3 from nucleophosmin, NPM1. Plays a role in the regulation of sumoylation status of ZNF148. Functions as a component of the Five Friends of Methylated CHTOP (5FMC) complex; the 5FMC complex is recruited to ZNF148 by methylated CHTOP, leading to desumoylation of ZNF148 and subsequent transactivation of ZNF148 target genes. Deconjugates SUMO2 from KAT5. Catalyzes desumoylation of MRE11. The polypeptide is Sentrin-specific protease 3 (Homo sapiens (Human)).